Consider the following 179-residue polypeptide: ATP synthase subunit delta (179 aa).

It belongs to the ATPase delta chain family. In terms of assembly, F-type ATPases have 2 components, F(1) - the catalytic core - and F(0) - the membrane proton channel. F(1) has five subunits: alpha(3), beta(3), gamma(1), delta(1), epsilon(1). F(0) has three main subunits: a(1), b(2) and c(10-14). The alpha and beta chains form an alternating ring which encloses part of the gamma chain. F(1) is attached to F(0) by a central stalk formed by the gamma and epsilon chains, while a peripheral stalk is formed by the delta and b chains.

Its subcellular location is the cell membrane. Its function is as follows. F(1)F(0) ATP synthase produces ATP from ADP in the presence of a proton or sodium gradient. F-type ATPases consist of two structural domains, F(1) containing the extramembraneous catalytic core and F(0) containing the membrane proton channel, linked together by a central stalk and a peripheral stalk. During catalysis, ATP synthesis in the catalytic domain of F(1) is coupled via a rotary mechanism of the central stalk subunits to proton translocation. In terms of biological role, this protein is part of the stalk that links CF(0) to CF(1). It either transmits conformational changes from CF(0) to CF(1) or is implicated in proton conduction. This Clostridium botulinum (strain Alaska E43 / Type E3) protein is ATP synthase subunit delta.